The primary structure comprises 172 residues: Calcium channel flower homolog (172 aa).

The Cytoplasmic segment spans residues 1–32 (MSSSGGAPGASASSAPPAQEEGMTWWYRWLCR). Residues 33–53 (LSGVLGAVSCAISGLFNCITI) form a helical membrane-spanning segment. The Extracellular segment spans residues 54-57 (HPLN). A helical membrane pass occupies residues 58–78 (IAAGVWMIMNAFILLLCEAPF). At 79–102 (CCQFIEFANTVAEKVDRLRSWQKA) the chain is on the cytoplasmic side. Residues 103–123 (VFYCGMAVVPIVISLTLTTLL) form a helical membrane-spanning segment. Topologically, residues 124–125 (GN) are extracellular. A helical membrane pass occupies residues 126-142 (AIAFATGVLYGLSALGK). Residues 143–172 (KGDAISYARIQQQRQQADEEKLAETLEGEL) are Cytoplasmic-facing.

This sequence belongs to the calcium channel flower family. In terms of assembly, interacts with adaptor protein complex 2 (AP-2). Detected in skin cells at low levels of expression (at protein level).

The protein resides in the cell membrane. The protein localises to the cytoplasmic vesicle. It localises to the secretory vesicle. Its subcellular location is the synaptic vesicle. It is found in the golgi apparatus. The protein resides in the vesicle. The protein localises to the early endosome. It localises to the recycling endosome. Its subcellular location is the endoplasmic reticulum membrane. In terms of biological role, transmembrane protein which mediates synaptic endocytosis and fitness-based cell culling. In response to different stimulus strengths, controls two major modes of synaptic vesicle (SV) retrieval in hippocampal neurons; Clathrin-mediated endocytosis (CME) in response to mild stimulation and activity-dependent bulk endocytosis (ADBE) in response to strong stimulation. In cytotoxic T-lymphoocytes (CTLs) facilitates calcium-dependent endocytosis of cytotoxic granules at the immuno synapse. Different isoforms work as fitness fingerprints in 'loser' and 'winner' cells and thereby mediate win/lose decisions as part of the cell competition process. Its function is as follows. Functions with the other flower isoforms to produce tissue-specific fitness fingerprints that identify unfit or fit cells during cell selection processes in order to maintain tissue health. During cell competition, if levels of this isoform in cells is higher than in the surrounding neighboring cells, the cells are recognized as 'winner' cells, and do not undergo elimination via apoptosis. Functionally, functions with the other flower isoforms to produce tissue-specific fitness fingerprints that identify unfit or fit cells during cell selection processes in order to maintain tissue health. During cell competition, if levels of this isoform in unfit cells is higher than in the surrounding neighboring cells, the cells are recognized as 'loser' cells, and undergo elimination via apoptosis to be replaced by the surrounding healthy 'winner' cell population. The protein is Calcium channel flower homolog (CACFD1) of Homo sapiens (Human).